Reading from the N-terminus, the 117-residue chain is Modulator protein MzrA (117 aa).

The Cytoplasmic portion of the chain corresponds to 1 to 9 (MNSPGLRKP). Residues 10–29 (TIWRPLLLLFPLLALLLSMS) form a helical membrane-spanning segment. At 30-117 (SPRLPDEVML…THGTIRVARS (88 aa)) the chain is on the periplasmic side.

It belongs to the MzrA family. As to quaternary structure, interacts with EnvZ.

The protein localises to the cell inner membrane. Its function is as follows. Modulates the activity of the EnvZ/OmpR two-component regulatory system, probably by directly modulating EnvZ enzymatic activity and increasing stability of phosphorylated OmpR. This is Modulator protein MzrA from Dickeya zeae (strain Ech586) (Dickeya dadantii (strain Ech586)).